The primary structure comprises 522 residues: Peptide chain release factor 3 (522 aa).

The tr-type G domain maps to 9–276; sequence KKRRTFAIIS…SFVNLAPAPQ (268 aa). GTP contacts are provided by residues 18–25, 86–90, and 140–143; these read SHPDAGKT, DTPGH, and NKLD.

It belongs to the TRAFAC class translation factor GTPase superfamily. Classic translation factor GTPase family. PrfC subfamily.

Its subcellular location is the cytoplasm. Increases the formation of ribosomal termination complexes and stimulates activities of RF-1 and RF-2. It binds guanine nucleotides and has strong preference for UGA stop codons. It may interact directly with the ribosome. The stimulation of RF-1 and RF-2 is significantly reduced by GTP and GDP, but not by GMP. This is Peptide chain release factor 3 from Lactobacillus johnsonii (strain CNCM I-12250 / La1 / NCC 533).